We begin with the raw amino-acid sequence, 98 residues long: DNA/RNA-binding protein Alba (98 aa).

N6-acetyllysine is present on lysine 16.

Belongs to the histone-like Alba family. Acetylated. Acetylation at Lys-16 decreases DNA-binding affinity.

The protein resides in the cytoplasm. It is found in the chromosome. Its function is as follows. Binds double-stranded DNA tightly but without sequence specificity. Involved in DNA compaction. The protein is DNA/RNA-binding protein Alba of Metallosphaera sedula (strain ATCC 51363 / DSM 5348 / JCM 9185 / NBRC 15509 / TH2).